Here is a 114-residue protein sequence, read N- to C-terminus: Period circadian protein (114 aa).

The interval 23–114 (VTNTSIAGTG…VTLTESLLNK (92 aa)) is disordered. 14 repeat units span residues 30-31 (GT), 33-34 (GT), 36-37 (GT), 38-39 (GT), 40-41 (GT), 42-43 (GT), 44-45 (GT), 46-47 (GT), 48-49 (GT), 50-51 (GT), 52-53 (GT), 54-55 (GT), 56-57 (GT), and 58-59 (GT). Residues 30-79 (GTGGTGGTGTGTGTGTGTGTGTGTGTGTGTDTGTGTGTGTETGTGTGTGT) are compositionally biased toward gly residues. The segment at 30–87 (GTGGTGGTGTGTGTGTGTGTGTGTGTGTGTDTGTGTGTGTETGTGTGTGTRNGTNSGT) is 28 X 2 AA approximate tandem repeats of G-[TN]. A 15; approximate repeat occupies 60-61 (DT). Repeat copies occupy residues 62–63 (GT), 64–65 (GT), 66–67 (GT), and 68–69 (GT). The stretch at 70 to 71 (ET) is one 20; approximate repeat. Tandem repeats lie at residues 72–73 (GT), 74–75 (GT), 76–77 (GT), and 78–79 (GT). The stretch at 80–81 (RN) is one 25; approximate repeat. Over residues 80–91 (RNGTNSGTKTGT) the composition is skewed to low complexity. Repeat unit 26 spans residues 82 to 83 (GT). The 27; approximate repeat unit spans residues 84-85 (NS). Residues 86 to 87 (GT) form repeat 28. Residues 105–114 (VTLTESLLNK) show a composition bias toward polar residues.

In terms of assembly, forms a heterodimer with timeless (TIM); the complex then translocates into the nucleus. In terms of processing, phosphorylated with a circadian rhythmicity, probably by the double-time protein (dbt). Phosphorylation could be implicated in the stability of per monomer and in the formation of heterodimer per-tim.

The protein resides in the nucleus. It is found in the cytoplasm. Its subcellular location is the perinuclear region. In terms of biological role, essential for biological clock functions. Determines the period length of circadian and ultradian rhythms; an increase in PER dosage leads to shortened circadian rhythms and a decrease leads to lengthened circadian rhythms. Essential for the circadian rhythmicity of locomotor activity, eclosion behavior, and for the rhythmic component of the male courtship song that originates in the thoracic nervous system. The biological cycle depends on the rhythmic formation and nuclear localization of the TIM-PER complex. Light induces the degradation of TIM, which promotes elimination of PER. Nuclear activity of the heterodimer coordinatively regulates PER and TIM transcription through a negative feedback loop. Behaves as a negative element in circadian transcriptional loop. Does not appear to bind DNA, suggesting indirect transcriptional inhibition. This Drosophila orena (Fruit fly) protein is Period circadian protein (per).